The following is a 178-amino-acid chain: Adenine phosphoribosyltransferase (178 aa).

It belongs to the purine/pyrimidine phosphoribosyltransferase family. As to quaternary structure, homodimer.

It is found in the cytoplasm. It catalyses the reaction AMP + diphosphate = 5-phospho-alpha-D-ribose 1-diphosphate + adenine. Its pathway is purine metabolism; AMP biosynthesis via salvage pathway; AMP from adenine: step 1/1. Functionally, catalyzes a salvage reaction resulting in the formation of AMP, that is energically less costly than de novo synthesis. This Erythrobacter litoralis (strain HTCC2594) protein is Adenine phosphoribosyltransferase.